The primary structure comprises 117 residues: Photosystem II reaction center Psb28 protein (117 aa).

The protein belongs to the Psb28 family. As to quaternary structure, part of the photosystem II complex.

It is found in the cellular thylakoid membrane. The protein is Photosystem II reaction center Psb28 protein of Prochlorococcus marinus (strain AS9601).